The sequence spans 816 residues: Protein kinase C-binding protein NELL2 (816 aa).

The N-terminal stretch at 1-21 (MESRVLLRTFCLIFGLGAVWG) is a signal peptide. Residues Asn-53, Asn-225, Asn-293, and Asn-298 are each glycosylated (N-linked (GlcNAc...) asparagine). Residues 64-228 (PRSVKASTAT…AQCPDLNRTC (165 aa)) form the Laminin G-like domain. A VWFC 1 domain is found at 272 to 331 (RTCTMKGTTYREFESWIDGCKNCTCLNGTIQCETLICPNPDCPLNSALAYVDGKCCKECK). The region spanning 397–439 (GYDFCSERHNCMENSVCRNLNDRAVCSCRDGFRALREDNAYCE) is the EGF-like 1 domain. 3 disulfides stabilise this stretch: Cys-401-Cys-413, Cys-407-Cys-422, and Cys-424-Cys-438. Asp-440, Ile-441, and Glu-443 together coordinate Ca(2+). The 42-residue stretch at 440–481 (DIDECAEGRHYCRENTMCVNTPGSFMCICKTGYIRIDDYSCT) folds into the EGF-like 2; calcium-binding domain. 9 disulfide bridges follow: Cys-444–Cys-457, Cys-451–Cys-466, Cys-468–Cys-480, Cys-486–Cys-499, Cys-493–Cys-508, Cys-510–Cys-521, Cys-525–Cys-535, Cys-529–Cys-541, and Cys-543–Cys-552. The Ca(2+) site is built by Asn-459, Thr-460, and Ser-463. One can recognise an EGF-like 3; calcium-binding domain in the interval 482–522 (EHDECITNQHNCDENALCFNTVGGHNCVCKPGYTGNGTTCK). A glycan (N-linked (GlcNAc...) asparagine) is linked at Asn-517. An EGF-like 4 domain is found at 523–553 (AFCKDGCRNGGACIAANVCACPQGFTGPSCE). Thr-548 carries O-linked (GlcNAc...) threonine glycosylation. Asp-555, Ile-556, and Glu-558 together coordinate Ca(2+). The region spanning 555–601 (DIDECSDGFVQCDSRANCINLPGWYHCECRDGYHDNGMFSPSGESCE) is the EGF-like 5; calcium-binding domain. Intrachain disulfides connect Cys-559–Cys-572, Cys-566–Cys-581, and Cys-583–Cys-600. Asn-574, Leu-575, and Trp-578 together coordinate Ca(2+). Asp-602, Ile-603, and Glu-605 together coordinate Ca(2+). One can recognise an EGF-like 6; calcium-binding domain in the interval 602-637 (DIDECGTGRHSCANDTICFNLDGGYDCRCPHGKNCT). 3 disulfide bridges follow: Cys-606–Cys-619, Cys-613–Cys-628, and Cys-630–Cys-636. Residue Asn-615 is glycosylated (N-linked (GlcNAc...) asparagine). 3 residues coordinate Ca(2+): Asn-621, Leu-622, and Gly-625. Asn-635 carries N-linked (GlcNAc...) asparagine glycosylation. VWFC domains follow at residues 638 to 693 (GDCI…PECD) and 698 to 756 (SQCL…PRCV).

In terms of assembly, homotrimer. Binds to PRKCB. Interacts with NICOL1; this interaction triggers epididymal differentiation.

It is found in the secreted. Functionally, plays multiple roles in neural tissues, regulates neuronal proliferation, survival, differentiation, polarization, as well as axon guidance and synaptic functions. Plays an important role in axon development during neuronal differentiation through the MAPK intracellular signaling pathway. Via binding to its receptor ROBO3, plays a role in axon guidance, functions as a repulsive guidance cue for commissural axons, helping to steer them across the spinal cord midline. Required for neuron survival through the modulation of MAPK signaling pathways too. Involved in the regulation of hypothalamic GNRH secretion and the control of puberty. Its function is as follows. Testicular luminal protein that signals through a ROS1-pathway to regulate the epididymal initial segment (IS) maturation, sperm maturation and male fertility. The protein is Protein kinase C-binding protein NELL2 (NELL2) of Pongo abelii (Sumatran orangutan).